We begin with the raw amino-acid sequence, 235 residues long: 2,3,4,5-tetrahydropyridine-2,6-dicarboxylate N-acetyltransferase (235 aa).

Belongs to the transferase hexapeptide repeat family. DapH subfamily.

The enzyme catalyses (S)-2,3,4,5-tetrahydrodipicolinate + acetyl-CoA + H2O = L-2-acetamido-6-oxoheptanedioate + CoA. Its pathway is amino-acid biosynthesis; L-lysine biosynthesis via DAP pathway; LL-2,6-diaminopimelate from (S)-tetrahydrodipicolinate (acetylase route): step 1/3. Its function is as follows. Catalyzes the transfer of an acetyl group from acetyl-CoA to tetrahydrodipicolinate. The sequence is that of 2,3,4,5-tetrahydropyridine-2,6-dicarboxylate N-acetyltransferase from Anoxybacillus flavithermus (strain DSM 21510 / WK1).